Here is a 250-residue protein sequence, read N- to C-terminus: 2,3-bisphosphoglycerate-dependent phosphoglycerate mutase (250 aa).

(2R)-2,3-bisphosphoglycerate-binding residues include Arg-10, His-11, Asn-17, Gly-24, Arg-62, Glu-89, Tyr-92, Lys-100, Arg-116, Arg-117, His-184, Gly-185, and Asn-186. His-11 (tele-phosphohistidine intermediate) is an active-site residue. Position 24 (Gly-24) interacts with (2R)-3-phosphoglycerate. (2R)-3-phosphoglycerate-binding residues include Glu-89, Tyr-92, Lys-100, Arg-116, and Arg-117. Catalysis depends on Glu-89, which acts as the Proton donor/acceptor. (2R)-3-phosphoglycerate is bound at residue Asn-186.

Belongs to the phosphoglycerate mutase family. BPG-dependent PGAM subfamily. As to expression, ubiquitously expressed with the highest expression in the sub-tegumental muscle layer (at protein level). Expressed in the tegument (at protein level).

Its subcellular location is the tegument. It catalyses the reaction (2R)-2-phosphoglycerate = (2R)-3-phosphoglycerate. It functions in the pathway carbohydrate degradation; glycolysis; pyruvate from D-glyceraldehyde 3-phosphate: step 3/5. Strongly activated by 2,3-bisphosphoglycerate (2,3-BPG). Inhibited by vanadate in a dose-dependent manner. Catalyzes interconversion of 3- and 2-phosphoglycerate with 2,3-bisphosphoglycerate (2,3-BPG) as the primer of the reaction. Schistosomula have significant surface phosphoglycerate mutase activity also without 2,3-BPG. Binds human plasminogen and enhances its conversion to active thrombolytic plasmin in the presence of human tissue plasminogen activator (tPA) in vitro. Host-interactive surface protein, which may degrade vascular blood clots surrounding the worm in vivo and thus may help survival of the parasite in its host microenvironment. The sequence is that of 2,3-bisphosphoglycerate-dependent phosphoglycerate mutase from Schistosoma mansoni (Blood fluke).